A 102-amino-acid chain; its full sequence is Small ribosomal subunit protein uS10 (102 aa).

The protein belongs to the universal ribosomal protein uS10 family. As to quaternary structure, part of the 30S ribosomal subunit.

Its function is as follows. Involved in the binding of tRNA to the ribosomes. The chain is Small ribosomal subunit protein uS10 from Acidiphilium cryptum (strain JF-5).